The primary structure comprises 316 residues: Probable cell division protein WhiA (316 aa).

Residues 277 to 310 (SLEQLGRLADPPITKDAIAGRIRRLLQLAEKTEK) constitute a DNA-binding region (H-T-H motif).

This sequence belongs to the WhiA family.

Functionally, involved in cell division and chromosome segregation. The sequence is that of Probable cell division protein WhiA from Bifidobacterium adolescentis (strain ATCC 15703 / DSM 20083 / NCTC 11814 / E194a).